The following is a 217-amino-acid chain: GTP-binding protein yptV2 (217 aa).

Position 20–27 (20–27 (GDSGVGKS)) interacts with GTP. The Effector region motif lies at 42–50 (FITTIGIDF). GTP contacts are provided by residues 68 to 72 (DTAGQ) and 126 to 129 (NKLD). The disordered stretch occupies residues 198-217 (QPVRLTSGSPSPAQGKSCCR). Over residues 201 to 211 (RLTSGSPSPAQ) the composition is skewed to polar residues. Residues cysteine 215 and cysteine 216 are each lipidated (S-geranylgeranyl cysteine).

The protein belongs to the small GTPase superfamily. Rab family.

The protein resides in the cell membrane. Its function is as follows. Protein transport. Probably involved in vesicular traffic. The sequence is that of GTP-binding protein yptV2 (YPTV2) from Volvox carteri (Green alga).